The primary structure comprises 194 residues: Imidazoleglycerol-phosphate dehydratase (194 aa).

It belongs to the imidazoleglycerol-phosphate dehydratase family.

It is found in the cytoplasm. It catalyses the reaction D-erythro-1-(imidazol-4-yl)glycerol 3-phosphate = 3-(imidazol-4-yl)-2-oxopropyl phosphate + H2O. The protein operates within amino-acid biosynthesis; L-histidine biosynthesis; L-histidine from 5-phospho-alpha-D-ribose 1-diphosphate: step 6/9. In Bacillus cereus (strain ZK / E33L), this protein is Imidazoleglycerol-phosphate dehydratase.